Reading from the N-terminus, the 137-residue chain is ATP synthase epsilon chain (137 aa).

Belongs to the ATPase epsilon chain family. F-type ATPases have 2 components, CF(1) - the catalytic core - and CF(0) - the membrane proton channel. CF(1) has five subunits: alpha(3), beta(3), gamma(1), delta(1), epsilon(1). CF(0) has three main subunits: a, b and c.

Its subcellular location is the cellular thylakoid membrane. In terms of biological role, produces ATP from ADP in the presence of a proton gradient across the membrane. This is ATP synthase epsilon chain from Trichormus variabilis (strain ATCC 29413 / PCC 7937) (Anabaena variabilis).